The primary structure comprises 98 residues: UPF0251 protein VC0395_0048/VC395_A0084 (98 aa).

It belongs to the UPF0251 family.

This chain is UPF0251 protein VC0395_0048/VC395_A0084, found in Vibrio cholerae serotype O1 (strain ATCC 39541 / Classical Ogawa 395 / O395).